Here is a 120-residue protein sequence, read N- to C-terminus: uncharacterized protein (120 aa).

This is an uncharacterized protein from Escherichia coli O6:H1 (strain CFT073 / ATCC 700928 / UPEC).